The primary structure comprises 394 residues: Elongation factor Tu 1 (394 aa).

The tr-type G domain maps to 10–204; that stretch reads KPHVNVGTIG…ALDSYIPQPE (195 aa). Residues 19–26 form a G1 region; sequence GHVDHGKT. 19–26 serves as a coordination point for GTP; the sequence is GHVDHGKT. Thr26 is a binding site for Mg(2+). The G2 stretch occupies residues 60-64; sequence GITIN. The interval 81–84 is G3; sequence DCPG. Residues 81-85 and 136-139 contribute to the GTP site; these read DCPGH and NKCD. The tract at residues 136-139 is G4; the sequence is NKCD. Residues 174–176 are G5; that stretch reads SAL.

Belongs to the TRAFAC class translation factor GTPase superfamily. Classic translation factor GTPase family. EF-Tu/EF-1A subfamily. As to quaternary structure, monomer.

It is found in the cytoplasm. The catalysed reaction is GTP + H2O = GDP + phosphate + H(+). In terms of biological role, GTP hydrolase that promotes the GTP-dependent binding of aminoacyl-tRNA to the A-site of ribosomes during protein biosynthesis. The polypeptide is Elongation factor Tu 1 (Yersinia pestis bv. Antiqua (strain Nepal516)).